A 505-amino-acid polypeptide reads, in one-letter code: L-amino-acid oxidase (505 aa).

The N-terminal stretch at Met-1 to Cys-18 is a signal peptide. A disulfide bond links Cys-28 and Cys-191. Residues Met-61 to Ser-62, Glu-81 to Ala-82, Arg-89, and Gly-105 to Arg-108 contribute to the FAD site. Residue Arg-108 participates in substrate binding. N-linked (GlcNAc...) asparagine glycosylation is present at Asn-190. His-241 lines the substrate pocket. An FAD-binding site is contributed by Val-279. An intrachain disulfide couples Cys-349 to Cys-430. A glycan (N-linked (GlcNAc...) asparagine) is linked at Asn-379. Tyr-390 contacts substrate. FAD is bound by residues Glu-475 and Gly-482 to Thr-487. Gly-482–Trp-483 serves as a coordination point for substrate.

This sequence belongs to the flavin monoamine oxidase family. FIG1 subfamily. Monomer. This is in contrast with most of its orthologs, that are non-covalently linked homodimers. It depends on FAD as a cofactor. N-glycosylated. As to expression, expressed by the venom gland.

The protein localises to the secreted. It carries out the reaction an L-alpha-amino acid + O2 + H2O = a 2-oxocarboxylate + H2O2 + NH4(+). The catalysed reaction is L-leucine + O2 + H2O = 4-methyl-2-oxopentanoate + H2O2 + NH4(+). Its function is as follows. Catalyzes an oxidative deamination of predominantly hydrophobic and aromatic L-amino acids, thus producing hydrogen peroxide that may contribute to the diverse toxic effects of this enzyme. Shows activity on L-Leu. Exhibits diverse biological activities, such as hemorrhage, edema, antibacterial and antiparasitic activities, as well as regulation of platelet aggregation. Effects of snake L-amino oxidases on platelets are controversial, since they either induce aggregation or inhibit agonist-induced aggregation. These different effects are probably due to different experimental conditions. This protein has an ability to induce hemolysis and apoptosis. In Protobothrops flavoviridis (Habu), this protein is L-amino-acid oxidase.